The sequence spans 162 residues: Allophycocyanin alpha-B chain (162 aa).

N71 carries the post-translational modification N4-methylasparagine. C81 contributes to the (2R,3E)-phycocyanobilin binding site.

Belongs to the phycobiliprotein family. In terms of processing, contains one covalently linked phycocyanobilin chromophore.

The protein localises to the plastid. It is found in the cyanelle thylakoid membrane. Functionally, allophycocyanin is a photosynthetic bile pigment-protein complex with maximum absorption at approximately 650 nanometers. The protein is Allophycocyanin alpha-B chain (apcD) of Cyanophora paradoxa.